Here is a 116-residue protein sequence, read N- to C-terminus: NADH-ubiquinone oxidoreductase chain 3 (116 aa).

A run of 3 helical transmembrane segments spans residues 3–23, 56–76, and 84–104; these read LVTTIITITITLSAVLATISF, FFLIAILFLLFDLEIALLLPL, and APTLTLLWSTAVLALLTLGLI.

This sequence belongs to the complex I subunit 3 family.

It is found in the mitochondrion membrane. It catalyses the reaction a ubiquinone + NADH + 5 H(+)(in) = a ubiquinol + NAD(+) + 4 H(+)(out). Its function is as follows. Core subunit of the mitochondrial membrane respiratory chain NADH dehydrogenase (Complex I) that is believed to belong to the minimal assembly required for catalysis. Complex I functions in the transfer of electrons from NADH to the respiratory chain. The immediate electron acceptor for the enzyme is believed to be ubiquinone. The chain is NADH-ubiquinone oxidoreductase chain 3 (MT-ND3) from Oncorhynchus nerka (Sockeye salmon).